Consider the following 222-residue polypeptide: N-(5'-phosphoribosyl)anthranilate isomerase (222 aa).

It belongs to the TrpF family.

It carries out the reaction N-(5-phospho-beta-D-ribosyl)anthranilate = 1-(2-carboxyphenylamino)-1-deoxy-D-ribulose 5-phosphate. It participates in amino-acid biosynthesis; L-tryptophan biosynthesis; L-tryptophan from chorismate: step 3/5. The chain is N-(5'-phosphoribosyl)anthranilate isomerase from Rhizobium rhizogenes (strain K84 / ATCC BAA-868) (Agrobacterium radiobacter).